A 702-amino-acid chain; its full sequence is Exodeoxyribonuclease 1 (702 aa).

Positions 1–96 are N-domain; the sequence is MGIQGLLPQL…STESKRRDKR (96 aa). Positions 30, 78, 150, 152, 171, 173, and 227 each coordinate Mg(2+). An I-domain region spans residues 114–247; sequence NAMDYFQKCV…ITAMKLVRRF (134 aa). Serine 372 bears the Phosphoserine mark. Disordered stretches follow at residues 465–571 and 660–685; these read SIQD…SQRS and SFNSSPILHEESKKRDIETTKSSQAR. Residues 474-498 are compositionally biased toward polar residues; it reads NSQSLEEPVSESQLSTQIPSSFITT. Acidic residues-rich tracts occupy residues 500 to 518 and 535 to 550; these read LEDDDNLSEEVSEVVSDIE and NTDDDGDGDTSEDYSE. The span at 558 to 571 shows a compositional bias: low complexity; that stretch reads TSSTTSFPGSSQRS. Residues 667–678 are compositionally biased toward basic and acidic residues; that stretch reads LHEESKKRDIET.

Belongs to the XPG/RAD2 endonuclease family. EXO1 subfamily. In terms of assembly, interacts with mismatch repair protein MSH2. Mg(2+) is required as a cofactor.

It is found in the nucleus. Its activity is regulated as follows. Inactivated by calcium and zinc ions. 5'-&gt;3' double-stranded DNA exonuclease involved in mismatch repair and eventually also in mitotic recombination between direct repeats. Also has a minor role in the correction of large DNA mismatches that occur in the heteroduplex DNA during meiotic recombination at the HIS4 locus. In Saccharomyces cerevisiae (strain ATCC 204508 / S288c) (Baker's yeast), this protein is Exodeoxyribonuclease 1 (EXO1).